A 223-amino-acid chain; its full sequence is uncharacterized protein (223 aa).

Its subcellular location is the plastid. It localises to the chloroplast. This is an uncharacterized protein from Mesostigma viride (Green alga).